We begin with the raw amino-acid sequence, 475 residues long: Ribulose bisphosphate carboxylase large chain (475 aa).

The propeptide occupies 1-2 (MA). Proline 3 bears the N-acetylproline mark. N6,N6,N6-trimethyllysine is present on lysine 14. The substrate site is built by asparagine 123 and threonine 173. Lysine 175 serves as the catalytic Proton acceptor. Residue lysine 177 participates in substrate binding. Mg(2+) is bound by residues lysine 201, aspartate 203, and glutamate 204. Lysine 201 carries the post-translational modification N6-carboxylysine. Histidine 294 functions as the Proton acceptor in the catalytic mechanism. The substrate site is built by arginine 295, histidine 327, and serine 379.

It belongs to the RuBisCO large chain family. Type I subfamily. In terms of assembly, heterohexadecamer of 8 large chains and 8 small chains; disulfide-linked. The disulfide link is formed within the large subunit homodimers. Requires Mg(2+) as cofactor. Post-translationally, the disulfide bond which can form in the large chain dimeric partners within the hexadecamer appears to be associated with oxidative stress and protein turnover.

The protein resides in the plastid. Its subcellular location is the chloroplast. The catalysed reaction is 2 (2R)-3-phosphoglycerate + 2 H(+) = D-ribulose 1,5-bisphosphate + CO2 + H2O. It catalyses the reaction D-ribulose 1,5-bisphosphate + O2 = 2-phosphoglycolate + (2R)-3-phosphoglycerate + 2 H(+). RuBisCO catalyzes two reactions: the carboxylation of D-ribulose 1,5-bisphosphate, the primary event in carbon dioxide fixation, as well as the oxidative fragmentation of the pentose substrate in the photorespiration process. Both reactions occur simultaneously and in competition at the same active site. This is Ribulose bisphosphate carboxylase large chain from Bryopsis maxima (Green alga).